A 223-amino-acid polypeptide reads, in one-letter code: Ribosome maturation factor RimM (223 aa).

Residues 1-12 show a composition bias toward low complexity; that stretch reads MARRPGSSSRGP. 2 disordered regions span residues 1 to 44 and 203 to 223; these read MARR…DPGL and VADP…DDPG. The 76-residue stretch at 135–210 folds into the PRC barrel domain; the sequence is DEDEFFLTDL…KVVADPPDDL (76 aa).

The protein belongs to the RimM family. In terms of assembly, binds ribosomal protein uS19.

The protein localises to the cytoplasm. Its function is as follows. An accessory protein needed during the final step in the assembly of 30S ribosomal subunit, possibly for assembly of the head region. Essential for efficient processing of 16S rRNA. May be needed both before and after RbfA during the maturation of 16S rRNA. It has affinity for free ribosomal 30S subunits but not for 70S ribosomes. In Methylorubrum extorquens (strain CM4 / NCIMB 13688) (Methylobacterium extorquens), this protein is Ribosome maturation factor RimM.